The chain runs to 714 residues: Stellatatriene synthase (714 aa).

The segment at 1 to 325 (MEYKFSTVVD…RYNSSGSFSD (325 aa)) is stellata-2,6,19-trien synthase. Aspartate 92 and aspartate 96 together coordinate Mg(2+). The DDXXD motif 1 signature appears at 92 to 96 (DDVTD). The short motif at 276–284 (YLKIVEEYK) is the NSE motif element. Residues 326–713 (HQLELMKNGV…LRLIMELLKT (388 aa)) are geranylgeranyl diphosphate synthase. The disordered stretch occupies residues 332–356 (KNGVPKDPASGSTNGTSNGTSNGTS). Positions 341 to 356 (SGSTNGTSNGTSNGTS) are enriched in low complexity. Lysine 434, arginine 437, and histidine 466 together coordinate isopentenyl diphosphate. Mg(2+)-binding residues include aspartate 473 and aspartate 477. The DDXXD motif 2 signature appears at 473-477 (DDVED). Residue arginine 482 coordinates dimethylallyl diphosphate. Arginine 483 contributes to the isopentenyl diphosphate binding site. Residues lysine 560, threonine 561, glutamine 596, asparagine 603, lysine 613, and lysine 623 each contribute to the dimethylallyl diphosphate site.

It in the N-terminal section; belongs to the terpene synthase family. This sequence in the C-terminal section; belongs to the FPP/GGPP synthase family. In terms of assembly, hexamer.

It carries out the reaction 4 isopentenyl diphosphate + dimethylallyl diphosphate = (2E,6E,10E,14E)-geranylfarnesyl diphosphate + 4 diphosphate. The enzyme catalyses (2E,6E,10E,14E)-geranylfarnesyl diphosphate = stellata-2,6,19-triene + diphosphate. It functions in the pathway secondary metabolite biosynthesis; terpenoid biosynthesis. Functionally, multifunctional diterpene synthase; part of the gene cluster that mediates the biosynthesis of the sesterterpene stellatic acid. The first step in the pathway is performed by the stellatatriene synthase that possesses both prenyl transferase and terpene cyclase activity, converting isopentenyl diphosphate and dimethylallyl diphosphate into geranylgeranyl diphosphate (GGDP) and then converting GGDP into stellata-2,6,19-triene. The cytochrome P450 monooxygenase Stl-P450 then catalyzes three successive oxidation reactions on the C-20 methyl group to generate the carboxylic acid of stellatic acid. The polypeptide is Stellatatriene synthase (Emericella variicolor (Aspergillus stellatus)).